The chain runs to 148 residues: Arginine repressor (148 aa).

It belongs to the ArgR family.

It localises to the cytoplasm. It functions in the pathway amino-acid biosynthesis; L-arginine biosynthesis [regulation]. Regulates arginine biosynthesis genes. The chain is Arginine repressor from Prosthecochloris aestuarii (strain DSM 271 / SK 413).